The chain runs to 209 residues: CAAX box protein 1 (209 aa).

Residues 182–209 (TAGRPPRDLSPSARPISSPPPETSCVLA) are disordered. Residue C206 is modified to Cysteine methyl ester. The S-farnesyl cysteine moiety is linked to residue C206. The propeptide at 207 to 209 (VLA) is removed in mature form.

As to expression, ubiquitous.

The protein localises to the cell membrane. This chain is CAAX box protein 1, found in Homo sapiens (Human).